Consider the following 896-residue polypeptide: C-type lectin domain-containing protein 180 (896 aa).

The first 18 residues, 1–18 (MRHLIFTGFVLTLTALEA), serve as a signal peptide directing secretion. A C-type lectin domain is found at 54 to 178 (PWGDLYQFRA…CESTSPDHHA (125 aa)). Asn-133 carries an N-linked (GlcNAc...) asparagine glycan. The cysteines at positions 154 and 169 are disulfide-linked. Residues Asn-221 and Asn-235 are each glycosylated (N-linked (GlcNAc...) asparagine). 4 disordered regions span residues 243 to 264 (STVK…SVSK), 354 to 436 (VKQE…LAPE), 492 to 519 (EKLE…EEQK), and 557 to 809 (KVKA…TTKP). Residues 250-260 (SEEETSSEEEE) are compositionally biased toward acidic residues. Basic and acidic residues-rich tracts occupy residues 354–382 (VKQE…KISE) and 395–406 (DMPKADIEPPKE). Acidic residues predominate over residues 407–426 (EDCDEEGSGSGSGEEDEKDE). Residues 427–436 (SSEKIELAPE) are compositionally biased toward basic and acidic residues. 3 stretches are compositionally biased toward basic and acidic residues: residues 575 to 590 (KSAK…KVGN), 607 to 663 (QNRE…ETKL), and 683 to 692 (EEPKSDKDSE). The span at 727–739 (STTTESTTVAVKE) shows a compositional bias: low complexity. Residues 740–768 (VPVDEIEKIAKLEAKQHTEDEKVTVETKQ) are compositionally biased toward basic and acidic residues. Positions 773–809 (TPAPTTSEKTSTTAAPSTKPAEETTTTTEAPSTTTKP) are enriched in low complexity.

The protein resides in the secreted. This chain is C-type lectin domain-containing protein 180 (clec-180), found in Caenorhabditis elegans.